The chain runs to 481 residues: ATP synthase subunit beta (481 aa).

An ATP-binding site is contributed by 160 to 167 (GGAGVGKT).

It belongs to the ATPase alpha/beta chains family. In terms of assembly, F-type ATPases have 2 components, CF(1) - the catalytic core - and CF(0) - the membrane proton channel. CF(1) has five subunits: alpha(3), beta(3), gamma(1), delta(1), epsilon(1). CF(0) has three main subunits: a(1), b(2) and c(9-12). The alpha and beta chains form an alternating ring which encloses part of the gamma chain. CF(1) is attached to CF(0) by a central stalk formed by the gamma and epsilon chains, while a peripheral stalk is formed by the delta and b chains.

Its subcellular location is the cell inner membrane. It carries out the reaction ATP + H2O + 4 H(+)(in) = ADP + phosphate + 5 H(+)(out). Functionally, produces ATP from ADP in the presence of a proton gradient across the membrane. The catalytic sites are hosted primarily by the beta subunits. This chain is ATP synthase subunit beta, found in Stigmatella aurantiaca.